A 436-amino-acid chain; its full sequence is Putative ankyrin repeat protein FPV026 (436 aa).

ANK repeat units follow at residues 63–92, 101–130, 135–164, 168–197, 201–230, and 234–266; these read EGIR…NVNE, TCYS…DVNN, LRNT…DQNI, NGNI…NLEI, NGRT…LVDS, and EGYT…FLNI. The F-box domain occupies 409-436; the sequence is TSTITNLPYEVIYIIVEKMTNKELCEIR.

The polypeptide is Putative ankyrin repeat protein FPV026 (Fowlpox virus (strain NVSL) (FPV)).